Here is a 215-residue protein sequence, read N- to C-terminus: Phosphatidylserine decarboxylase proenzyme (215 aa).

Ser185 functions as the Schiff-base intermediate with substrate; via pyruvic acid in the catalytic mechanism. The residue at position 185 (Ser185) is a Pyruvic acid (Ser); by autocatalysis.

This sequence belongs to the phosphatidylserine decarboxylase family. PSD-A subfamily. As to quaternary structure, heterodimer of a large membrane-associated beta subunit and a small pyruvoyl-containing alpha subunit. It depends on pyruvate as a cofactor. Post-translationally, is synthesized initially as an inactive proenzyme. Formation of the active enzyme involves a self-maturation process in which the active site pyruvoyl group is generated from an internal serine residue via an autocatalytic post-translational modification. Two non-identical subunits are generated from the proenzyme in this reaction, and the pyruvate is formed at the N-terminus of the alpha chain, which is derived from the carboxyl end of the proenzyme. The post-translation cleavage follows an unusual pathway, termed non-hydrolytic serinolysis, in which the side chain hydroxyl group of the serine supplies its oxygen atom to form the C-terminus of the beta chain, while the remainder of the serine residue undergoes an oxidative deamination to produce ammonia and the pyruvoyl prosthetic group on the alpha chain.

Its subcellular location is the cell membrane. The catalysed reaction is a 1,2-diacyl-sn-glycero-3-phospho-L-serine + H(+) = a 1,2-diacyl-sn-glycero-3-phosphoethanolamine + CO2. It participates in phospholipid metabolism; phosphatidylethanolamine biosynthesis; phosphatidylethanolamine from CDP-diacylglycerol: step 2/2. Catalyzes the formation of phosphatidylethanolamine (PtdEtn) from phosphatidylserine (PtdSer). In Streptomyces avermitilis (strain ATCC 31267 / DSM 46492 / JCM 5070 / NBRC 14893 / NCIMB 12804 / NRRL 8165 / MA-4680), this protein is Phosphatidylserine decarboxylase proenzyme.